The sequence spans 303 residues: Probable cell division protein WhiA (303 aa).

The segment at residues 272 to 303 (SIQQLADSLSTPLTKSGVNHRLRKINKIADEL) is a DNA-binding region (H-T-H motif).

It belongs to the WhiA family.

Its function is as follows. Involved in cell division and chromosome segregation. The chain is Probable cell division protein WhiA from Streptococcus pneumoniae (strain Hungary19A-6).